The following is a 208-amino-acid chain: TM2 domain-containing protein 1 (208 aa).

A signal peptide spans 1 to 37 (MAAAWPAGRASPAAGPPGLLRTLWLVTVAAGHCGAAA). Residues 38–129 (SGAVGGEETP…YSYKVAVALS (92 aa)) are Extracellular-facing. Residues Asn73, Asn76, and Asn97 are each glycosylated (N-linked (GlcNAc...) asparagine). A TM2 domain is found at 119–167 (GYSYKVAVALSLFLGWLGADRFYLGYPALGLLKFCTVGFCGIGSLIDFI). Residues 130 to 150 (LFLGWLGADRFYLGYPALGLL) traverse the membrane as a helical segment. Residues 151-154 (KFCT) are Cytoplasmic-facing. A helical transmembrane segment spans residues 155–175 (VGFCGIGSLIDFILISMQIVG). At 176 to 208 (PSDGSSYIIDYYGTRLTRLSITNETFRKTQLYP) the chain is on the extracellular side. An N-linked (GlcNAc...) asparagine glycan is attached at Asn198.

It belongs to the TM2 family. As to quaternary structure, interacts with APP beta-APP42 (amyloid-beta protein 42). In terms of processing, N-glycosylated.

It localises to the membrane. In terms of biological role, may participate in amyloid-beta-induced apoptosis via its interaction with beta-APP42. This chain is TM2 domain-containing protein 1 (Tm2d1), found in Mus musculus (Mouse).